The following is a 427-amino-acid chain: Ribose-phosphate pyrophosphokinase 1 (427 aa).

3 residues coordinate Mg(2+): Asp128, His130, and Asp143. Ser199, Ser218, Ser271, and Ser295 each carry phosphoserine.

Belongs to the ribose-phosphate pyrophosphokinase family.

It is found in the cytoplasm. The enzyme catalyses D-ribose 5-phosphate + ATP = 5-phospho-alpha-D-ribose 1-diphosphate + AMP + H(+). The protein operates within metabolic intermediate biosynthesis; 5-phospho-alpha-D-ribose 1-diphosphate biosynthesis; 5-phospho-alpha-D-ribose 1-diphosphate from D-ribose 5-phosphate (route I): step 1/1. 5-phosphoribose 1-diphosphate synthase involved in nucleotide, histidine, and tryptophan biosynthesis. Active in heteromultimeric complexes with other 5-phosphoribose 1-diphosphate synthases (PRS2, PRS3, PRS4 and PRS5). The protein is Ribose-phosphate pyrophosphokinase 1 (PRS1) of Saccharomyces cerevisiae (strain ATCC 204508 / S288c) (Baker's yeast).